A 134-amino-acid polypeptide reads, in one-letter code: Loki profilin-2 (134 aa).

The interval 55–62 (LALGEKGI) is loki loop.

It belongs to the Asgard profilin family.

The protein resides in the cytoplasm. Its subcellular location is the cytoskeleton. Inhibition of rabbit actin polymerization is reduced by phosphatidylinositol-(4,5)-P2(1,2-dipalmitoyl), a soluble form of the phospholipid phosphatidylinositol, suggesting an unknown lipid might regulate actin-profilin interaction in vivo. Functionally, binds to actin and affects the structure of the cytoskeleton. At high concentrations inhibits spontaneous rabbit actin nucleation. This strongly suggests this archaea has a profilin-regulated actin system, and actin-type genes can be identified in this organism. This is Loki profilin-2 from Lokiarchaeum sp. (strain GC14_75).